The chain runs to 347 residues: Melanoma-associated antigen B1 (347 aa).

A compositionally biased stretch (basic residues) spans 1 to 17 (MPRGQKSKLRAREKRRK). The segment at 1–104 (MPRGQKSKLR…QATTSTESSV (104 aa)) is disordered. Composition is skewed to polar residues over residues 39–53 (PSSS…TSSP) and 89–102 (ENAS…STES). The MAGE domain maps to 108–307 (VAWEAGMLMH…RDFPSHYEEA (200 aa)). The tract at residues 315 to 347 (AQVRSSVRARRRTTATTFRARSRAPFSRSSHPM) is disordered. Over residues 328 to 347 (TATTFRARSRAPFSRSSHPM) the composition is skewed to low complexity.

In terms of tissue distribution, expressed only in testis.

In Homo sapiens (Human), this protein is Melanoma-associated antigen B1 (MAGEB1).